A 309-amino-acid chain; its full sequence is MIARFAPALAAVSPALHTALAPLLDHHAFAGWLSAPQVKELMQAGGLDEDALCFTLLPLAAAYAVTPLSHFNVGAIACGISGNLYFGANMEFLAAPLQQTVHAEQSAIAHAWLRGEKRLRALTVNYTPCGHCRQFMNELNSGTDLIICLPERSAATLASYLPDAFGPRDLAIQSLLLDEIDHAFAAAAWLDHDLSAPSPDDNDPLVSTALDAASRSHAPYSQSHSGVALQTQDGCVYAGRYAENAAFNPSLPPLQTALILMNAAGADDRQIRRAVLAERQNAPITQWPATNATLAALGCHEVHHLSLSL.

2 consecutive CMP/dCMP-type deaminase domains span residues 48–168 (DEDA…FGPR) and 200–309 (DDND…SLSL). Substrate is bound at residue 89–91 (NME). Histidine 102 lines the Zn(2+) pocket. Glutamate 104 acts as the Proton donor in catalysis. Residues cysteine 129 and cysteine 132 each contribute to the Zn(2+) site.

Belongs to the cytidine and deoxycytidylate deaminase family. In terms of assembly, homodimer. It depends on Zn(2+) as a cofactor.

It catalyses the reaction cytidine + H2O + H(+) = uridine + NH4(+). It carries out the reaction 2'-deoxycytidine + H2O + H(+) = 2'-deoxyuridine + NH4(+). This enzyme scavenges exogenous and endogenous cytidine and 2'-deoxycytidine for UMP synthesis. The protein is Cytidine deaminase of Sodalis glossinidius (strain morsitans).